Reading from the N-terminus, the 97-residue chain is Co-chaperonin GroES (97 aa).

The protein belongs to the GroES chaperonin family. Heptamer of 7 subunits arranged in a ring. Interacts with the chaperonin GroEL.

The protein localises to the cytoplasm. Functionally, together with the chaperonin GroEL, plays an essential role in assisting protein folding. The GroEL-GroES system forms a nano-cage that allows encapsulation of the non-native substrate proteins and provides a physical environment optimized to promote and accelerate protein folding. GroES binds to the apical surface of the GroEL ring, thereby capping the opening of the GroEL channel. This is Co-chaperonin GroES from Salmonella agona (strain SL483).